A 348-amino-acid polypeptide reads, in one-letter code: GTPase Obg (348 aa).

The region spanning 1–159 (MKFLDQAKIY…KTIILRLKLI (159 aa)) is the Obg domain. Positions 160–327 (ADAGLVGLPN…VLRLAADEIW (168 aa)) constitute an OBG-type G domain. GTP contacts are provided by residues 166-173 (GLPNAGKS), 191-195 (FTTLT), 212-215 (DIPG), 279-282 (NKMD), and 308-310 (SGV). The Mg(2+) site is built by S173 and T193.

The protein belongs to the TRAFAC class OBG-HflX-like GTPase superfamily. OBG GTPase family. Monomer. Mg(2+) serves as cofactor.

The protein localises to the cytoplasm. In terms of biological role, an essential GTPase which binds GTP, GDP and possibly (p)ppGpp with moderate affinity, with high nucleotide exchange rates and a fairly low GTP hydrolysis rate. Plays a role in control of the cell cycle, stress response, ribosome biogenesis and in those bacteria that undergo differentiation, in morphogenesis control. This is GTPase Obg from Parvibaculum lavamentivorans (strain DS-1 / DSM 13023 / NCIMB 13966).